A 309-amino-acid chain; its full sequence is Homoserine kinase (309 aa).

91–101 is a binding site for ATP; the sequence is PIGSGLGSSAC.

It belongs to the GHMP kinase family. Homoserine kinase subfamily.

The protein localises to the cytoplasm. It carries out the reaction L-homoserine + ATP = O-phospho-L-homoserine + ADP + H(+). It participates in amino-acid biosynthesis; L-threonine biosynthesis; L-threonine from L-aspartate: step 4/5. Its function is as follows. Catalyzes the ATP-dependent phosphorylation of L-homoserine to L-homoserine phosphate. The chain is Homoserine kinase from Klebsiella pneumoniae (strain 342).